The sequence spans 175 residues: ATP-dependent protease subunit HslV (175 aa).

Residue Thr-2 is part of the active site. 3 residues coordinate Na(+): Gly-158, Cys-161, and Thr-164.

It belongs to the peptidase T1B family. HslV subfamily. A double ring-shaped homohexamer of HslV is capped on each side by a ring-shaped HslU homohexamer. The assembly of the HslU/HslV complex is dependent on binding of ATP.

Its subcellular location is the cytoplasm. It catalyses the reaction ATP-dependent cleavage of peptide bonds with broad specificity.. Allosterically activated by HslU binding. Protease subunit of a proteasome-like degradation complex believed to be a general protein degrading machinery. The polypeptide is ATP-dependent protease subunit HslV (Haemophilus influenzae (strain ATCC 51907 / DSM 11121 / KW20 / Rd)).